A 520-amino-acid chain; its full sequence is MEELQGYLEKDRSRQQHFLYPLLFQEYIYALAHNHGLNGSIFYEPVEVFGYDNKSSLVLVKRLITRIYQQNFLISLVNDSNQNRFVGYNHNNFFFSHFHSQMISESFAIIVEIPFSLRLVSYFEEKEIPKYHNLRSIHSIFPFLEDKLSHLNYVSDILIPHPIHMEILVQILQCWIQDVPFLHLLRFFLHEYHNLNSLLITQKKSIYVFSKENKRLFRFLYNSYVFEWEFLLVFIRKQFSYLRLTSYGTFLERTHFYEKIEHLQIKDFVVVCRNYFHRTLWFCKDPFMHYVRYQGKAILASKGTHLLMKKWKYHFFNFWQYYFHVWSQPYRIHINQLSNYSFYFLGYLSSLLLHFSAVRNQMLENSFLINTITKKFDTIVPVIFLIGSLAKAKFCTVSGHPISKPIWTDLSDSDILNRFGRICRNLSHYHSGSSKKQGLYRIKYILRLSCARTLARKHKSTVRTFLRRLGSGLLEEFFTEEEQVLSLIFPKTTPFFLHGSHRERIWYLDIIRINDLVNHS.

Belongs to the intron maturase 2 family. MatK subfamily.

The protein resides in the plastid. It localises to the chloroplast. Functionally, usually encoded in the trnK tRNA gene intron. Probably assists in splicing its own and other chloroplast group II introns. The polypeptide is Maturase K (Aspidistra elatior (Cast-iron plant)).